A 149-amino-acid polypeptide reads, in one-letter code: Arginine regulator (149 aa).

Belongs to the ArgR family.

The protein localises to the cytoplasm. It participates in amino-acid degradation; L-arginine degradation via ADI pathway. In terms of biological role, regulates the transcription of the arc operon, involved in arginine catabolism. This Bacillus cereus (strain ATCC 14579 / DSM 31 / CCUG 7414 / JCM 2152 / NBRC 15305 / NCIMB 9373 / NCTC 2599 / NRRL B-3711) protein is Arginine regulator (argR1).